The primary structure comprises 261 residues: MLNNFNKFVASSVSMVYLAVLSWATAYAYGWGQAAYHGYPWWHVVQGGSMIARSLAYVCVVSMVFVIGYLIGYQAFKFIKRFFGLLHVSWGASHLGFVKIFILLVIVSTPIMLLLYFYVGILSSYRLMGCVLSILAISLVCHKFGRAISFSIRLRELMSNEKYYQIFMAFIFVYVVVSAFSIGYLRSAFFTGYDIIEVENRPYYILVANGDEEFILGENIKHNSHFIFFNRKTLNHYTIHITPSPYLPYKNQLSAQIYHQE.

In Moraxella bovis, this protein is Protein TfpB (tfpB).